Here is a 161-residue protein sequence, read N- to C-terminus: Urease accessory protein UreE (161 aa).

The interval 133–161 (EPEAGAYQSAPHSHSHAHDHPFVRLPAHS) is disordered.

Belongs to the UreE family.

It localises to the cytoplasm. In terms of biological role, involved in urease metallocenter assembly. Binds nickel. Probably functions as a nickel donor during metallocenter assembly. The polypeptide is Urease accessory protein UreE (Pseudomonas putida (strain W619)).